A 506-amino-acid chain; its full sequence is Conglutin alpha 1 (506 aa).

The N-terminal stretch at 1-19 (MANKLLALSLFLLFSGCFA) is a signal peptide. 2 cysteine pairs are disulfide-bonded: cysteine 31/cysteine 64 and cysteine 107/cysteine 328. The 200-residue stretch at 36-235 (LNALEPDNSV…AFSVDREIVR (200 aa)) folds into the Cupin type-1 1 domain. 3 disordered regions span residues 111 to 131 (YEEPQEQEQGQGPRPQDRHQK), 195 to 216 (QQKEGGQGQQQEGGNEGGNVLS), and 251 to 322 (VKEG…DRNG). Positions 195–207 (QQKEGGQGQQQEG) are enriched in low complexity. Residues 270 to 280 (EEEEEEEEEEE) are compositionally biased toward acidic residues. Residues 306-315 (QVRRVRRPHH) are compositionally biased toward basic residues. Residues 334 to 483 (HNIGQSTSPD…AFNLDRDQAR (150 aa)) form the Cupin type-1 2 domain. N-linked (GlcNAc...) asparagine glycans are attached at residues asparagine 397 and asparagine 439.

It belongs to the 11S seed storage protein (globulins) family. In terms of assembly, hexamer; each subunit is composed of an acidic and a basic chain derived from a single precursor and linked by a disulfide bond. Component of globulins complexes which accumulate in seeds. Expressed in developing cotyledons and in the embryonic axis of germinating seeds.

In terms of biological role, sulfur-rich seed storage protein. This protein found in the seeds of many leguminous and non-leguminous plants is the source of sulfur-containing amino acids in seed meals. In Lupinus angustifolius (Narrow-leaved blue lupine), this protein is Conglutin alpha 1.